Consider the following 82-residue polypeptide: LLAFQVQADPIQNTDEETKTEEQPGEEDQAVSVSFGDPEGTSLQEESLRDLVCYCRKRGCKRREHMNGTCRKGHLLYTLCCR.

The N-terminal stretch at 1–8 is a signal peptide; that stretch reads LLAFQVQA. The tract at residues 1 to 43 is disordered; it reads LLAFQVQADPIQNTDEETKTEEQPGEEDQAVSVSFGDPEGTSL. The propeptide occupies 9 to 47; the sequence is DPIQNTDEETKTEEQPGEEDQAVSVSFGDPEGTSLQEES. 3 cysteine pairs are disulfide-bonded: Cys-53-Cys-81, Cys-55-Cys-70, and Cys-60-Cys-80.

This sequence belongs to the alpha-defensin family.

The protein localises to the secreted. Probably contributes to the antimicrobial barrier function of the small bowel mucosa. The protein is Alpha-defensin 17 (Defa17) of Mus musculus (Mouse).